A 505-amino-acid chain; its full sequence is Trans-cinnamate 4-monooxygenase (505 aa).

The chain crosses the membrane as a helical span at residues 3–23 (LLLLEKTLLGSFVAILVAILV). (E)-cinnamate contacts are provided by residues 213-218 (RSRLAQ) and alanine 306. Cysteine 447 contributes to the heme binding site.

This sequence belongs to the cytochrome P450 family. It depends on heme as a cofactor.

It is found in the membrane. The catalysed reaction is (E)-cinnamate + reduced [NADPH--hemoprotein reductase] + O2 = (E)-4-coumarate + oxidized [NADPH--hemoprotein reductase] + H2O + H(+). Its pathway is phenylpropanoid metabolism; trans-4-coumarate biosynthesis; trans-4-coumarate from trans-cinnamate: step 1/1. Its function is as follows. Catalyzes the first oxidative step of the phenylpropanoid pathway in higher plants by transforming trans-cinnamate into p-coumarate. The compounds formed by this pathway are essential components for lignification, pollination, and defense against ultraviolet light, predators and pathogens. This chain is Trans-cinnamate 4-monooxygenase (CYP73A13), found in Populus tremuloides (Quaking aspen).